The following is a 46-amino-acid chain: Large ribosomal subunit protein bL34c (46 aa).

The protein belongs to the bacterial ribosomal protein bL34 family.

The protein resides in the plastid. The protein localises to the chloroplast. This Pyropia yezoensis (Susabi-nori) protein is Large ribosomal subunit protein bL34c.